The following is a 199-amino-acid chain: Recombination protein RecR (199 aa).

The C4-type zinc finger occupies 58–73 (CSRCFYFTEEDPCPLC). Residues 81-176 (QLICVVEEPQ…KVTRLAHGIP (96 aa)) form the Toprim domain.

It belongs to the RecR family.

Functionally, may play a role in DNA repair. It seems to be involved in an RecBC-independent recombinational process of DNA repair. It may act with RecF and RecO. The polypeptide is Recombination protein RecR (Syntrophotalea carbinolica (strain DSM 2380 / NBRC 103641 / GraBd1) (Pelobacter carbinolicus)).